Reading from the N-terminus, the 387-residue chain is Probable WRKY transcription factor 36 (387 aa).

The WRKY DNA-binding region spans 197–264; sequence CEDPSINDGC…YEGNHDHPLP (68 aa). The tract at residues 322–366 is disordered; it reads RPNYPNQLPDDYPLSSSSFSLNFSSPDPPPPSSHDHTLNFSGLRT. The segment covering 329-346 has biased composition (low complexity); that stretch reads LPDDYPLSSSSFSLNFSS.

The protein localises to the nucleus. Transcription factor. Interacts specifically with the W box (5'-(T)TGAC[CT]-3'), a frequently occurring elicitor-responsive cis-acting element. The protein is Probable WRKY transcription factor 36 (WRKY36) of Arabidopsis thaliana (Mouse-ear cress).